A 146-amino-acid polypeptide reads, in one-letter code: Leptin (146 aa).

The cysteines at positions 96 and 146 are disulfide-linked.

Belongs to the leptin family.

Its subcellular location is the secreted. Key player in the regulation of energy balance and body weight control. Once released into the circulation, has central and peripheral effects by binding LEPR, found in many tissues, which results in the activation of several major signaling pathways. In the hypothalamus, acts as an appetite-regulating factor that induces a decrease in food intake and an increase in energy consumption by inducing anorexinogenic factors and suppressing orexigenic neuropeptides, also regulates bone mass and secretion of hypothalamo-pituitary-adrenal hormones. In the periphery, increases basal metabolism, influences reproductive function, regulates pancreatic beta-cell function and insulin secretion, is pro-angiogenic for endothelial cell and affects innate and adaptive immunity. In the arcuate nucleus of the hypothalamus, activates by depolarization POMC neurons inducing FOS and SOCS3 expression to release anorexigenic peptides and inhibits by hyperpolarization NPY neurons inducing SOCS3 with a consequent reduction on release of orexigenic peptides. In addition to its known satiety inducing effect, has a modulatory role in nutrient absorption. In the intestine, reduces glucose absorption by enterocytes by activating PKC and leading to a sequential activation of p38, PI3K and ERK signaling pathways which exerts an inhibitory effect on glucose absorption. Acts as a growth factor on certain tissues, through the activation of different signaling pathways increases expression of genes involved in cell cycle regulation such as CCND1, via JAK2-STAT3 pathway, or VEGFA, via MAPK1/3 and PI3K-AKT1 pathways. May also play an apoptotic role via JAK2-STAT3 pathway and up-regulation of BIRC5 expression. Pro-angiogenic, has mitogenic activity on vascular endothelial cells and plays a role in matrix remodeling by regulating the expression of matrix metalloproteinases (MMPs) and tissue inhibitors of metalloproteinases (TIMPs). In innate immunity, modulates the activity and function of neutrophils by increasing chemotaxis and the secretion of oxygen radicals. Increases phagocytosis by macrophages and enhances secretion of pro-inflammatory mediators. Increases cytotoxic ability of NK cells. Plays a pro-inflammatory role, in synergy with IL1B, by inducing NOS2 which promotes the production of IL6, IL8 and Prostaglandin E2, through a signaling pathway that involves JAK2, PI3K, MAP2K1/MEK1 and MAPK14/p38. In adaptive immunity, promotes the switch of memory T-cells towards T helper-1 cell immune responses. Increases CD4(+)CD25(-) T-cell proliferation and reduces autophagy during TCR (T-cell receptor) stimulation, through MTOR signaling pathway activation and BCL2 up-regulation. This Gorilla gorilla gorilla (Western lowland gorilla) protein is Leptin (LEP).